The primary structure comprises 169 residues: Caltractin (169 aa).

Residues 1–24 are disordered; sequence MSYRKTVVSARRDQKKGRVGGLTE. EF-hand domains follow at residues 25-60, 61-96, 98-133, and 134-169; these read EQKQ…LGFE, PKKE…KMGE, DSRE…LGEN, and LTDE…TSLF. The Ca(2+) site is built by aspartate 38, aspartate 40, serine 42, threonine 44, and glutamate 49. Residues aspartate 147, asparagine 149, aspartate 151, glutamine 153, and glutamate 158 each contribute to the Ca(2+) site.

It belongs to the centrin family.

This calcium-binding protein is found in the basal body complexes (the functional homolog of the centrosome in animal cell). In mitotic cells it is specifically associated with the poles of the mitotic spindles at the sites of the duplicated basal body complexes. This chain is Caltractin, found in Dunaliella salina (Green alga).